The chain runs to 76 residues: uncharacterized protein (76 aa).

This is an uncharacterized protein from Acidianus bottle-shaped virus (isolate Italy/Pozzuoli) (ABV).